We begin with the raw amino-acid sequence, 293 residues long: ATP synthase gamma chain (293 aa).

The protein belongs to the ATPase gamma chain family. In terms of assembly, F-type ATPases have 2 components, CF(1) - the catalytic core - and CF(0) - the membrane proton channel. CF(1) has five subunits: alpha(3), beta(3), gamma(1), delta(1), epsilon(1). CF(0) has three main subunits: a, b and c.

The protein resides in the cell membrane. Functionally, produces ATP from ADP in the presence of a proton gradient across the membrane. The gamma chain is believed to be important in regulating ATPase activity and the flow of protons through the CF(0) complex. The protein is ATP synthase gamma chain of Streptococcus agalactiae serotype III (strain NEM316).